A 162-amino-acid polypeptide reads, in one-letter code: SsrA-binding protein (162 aa).

The protein belongs to the SmpB family.

The protein localises to the cytoplasm. Functionally, required for rescue of stalled ribosomes mediated by trans-translation. Binds to transfer-messenger RNA (tmRNA), required for stable association of tmRNA with ribosomes. tmRNA and SmpB together mimic tRNA shape, replacing the anticodon stem-loop with SmpB. tmRNA is encoded by the ssrA gene; the 2 termini fold to resemble tRNA(Ala) and it encodes a 'tag peptide', a short internal open reading frame. During trans-translation Ala-aminoacylated tmRNA acts like a tRNA, entering the A-site of stalled ribosomes, displacing the stalled mRNA. The ribosome then switches to translate the ORF on the tmRNA; the nascent peptide is terminated with the 'tag peptide' encoded by the tmRNA and targeted for degradation. The ribosome is freed to recommence translation, which seems to be the essential function of trans-translation. The chain is SsrA-binding protein from Shewanella frigidimarina (strain NCIMB 400).